We begin with the raw amino-acid sequence, 258 residues long: Deoxyribose-phosphate aldolase (258 aa).

Asp-101 acts as the Proton donor/acceptor in catalysis. Lys-166 serves as the catalytic Schiff-base intermediate with acetaldehyde. Lys-200 (proton donor/acceptor) is an active-site residue.

This sequence belongs to the DeoC/FbaB aldolase family. DeoC type 2 subfamily.

The protein localises to the cytoplasm. It carries out the reaction 2-deoxy-D-ribose 5-phosphate = D-glyceraldehyde 3-phosphate + acetaldehyde. It participates in carbohydrate degradation; 2-deoxy-D-ribose 1-phosphate degradation; D-glyceraldehyde 3-phosphate and acetaldehyde from 2-deoxy-alpha-D-ribose 1-phosphate: step 2/2. Functionally, catalyzes a reversible aldol reaction between acetaldehyde and D-glyceraldehyde 3-phosphate to generate 2-deoxy-D-ribose 5-phosphate. In Actinobacillus pleuropneumoniae serotype 5b (strain L20), this protein is Deoxyribose-phosphate aldolase.